The sequence spans 425 residues: Serine--tRNA ligase (425 aa).

Position 233–235 (233–235 (TAE)) interacts with L-serine. Position 264–266 (264–266 (RRE)) interacts with ATP. Glu287 is an L-serine binding site. 351–354 (EISS) contacts ATP. Ser385 lines the L-serine pocket.

The protein belongs to the class-II aminoacyl-tRNA synthetase family. Type-1 seryl-tRNA synthetase subfamily. In terms of assembly, homodimer. The tRNA molecule binds across the dimer.

Its subcellular location is the cytoplasm. The catalysed reaction is tRNA(Ser) + L-serine + ATP = L-seryl-tRNA(Ser) + AMP + diphosphate + H(+). It carries out the reaction tRNA(Sec) + L-serine + ATP = L-seryl-tRNA(Sec) + AMP + diphosphate + H(+). It participates in aminoacyl-tRNA biosynthesis; selenocysteinyl-tRNA(Sec) biosynthesis; L-seryl-tRNA(Sec) from L-serine and tRNA(Sec): step 1/1. Catalyzes the attachment of serine to tRNA(Ser). Is also able to aminoacylate tRNA(Sec) with serine, to form the misacylated tRNA L-seryl-tRNA(Sec), which will be further converted into selenocysteinyl-tRNA(Sec). The polypeptide is Serine--tRNA ligase (Parasynechococcus marenigrum (strain WH8102)).